The following is a 73-amino-acid chain: Toxin Td4 (73 aa).

The signal sequence occupies residues 1-7; it reads IGMVVEC. Residues 8–70 form the LCN-type CS-alpha/beta domain; sequence KDGYLVGNDG…TWDRATNRCG (63 aa). Disulfide bonds link Cys18-Cys69, Cys22-Cys44, Cys30-Cys50, and Cys34-Cys52. The residue at position 71 (Arg71) is an Arginine amide.

This sequence belongs to the long (4 C-C) scorpion toxin superfamily. Sodium channel inhibitor family. Beta subfamily. As to expression, expressed by the venom gland.

The protein localises to the secreted. Its function is as follows. Beta toxins bind voltage-independently at site-4 of sodium channels (Nav) and shift the voltage of activation toward more negative potentials thereby affecting sodium channel activation and promoting spontaneous and repetitive firing. The chain is Toxin Td4 from Tityus discrepans (Venezuelan scorpion).